Here is a 579-residue protein sequence, read N- to C-terminus: Mitogen-activated protein kinase kinase kinase 7 (579 aa).

Positions 1 to 300 (MSTASAASSS…FPGADEPLQY (300 aa)) are interaction with MAPK8IP1. The Protein kinase domain maps to 36 to 291 (IEVEEVVGRG…KIMTHLMRYF (256 aa)). ATP contacts are provided by residues 42–50 (VGRGAFGVV) and Lys-63. A Glycyl lysine isopeptide (Lys-Gly) (interchain with G-Cter in ubiquitin) cross-link involves residue Lys-72. Residue Asp-156 is the Proton acceptor of the active site. Lys-158 is covalently cross-linked (Glycyl lysine isopeptide (Lys-Gly) (interchain with G-Cter in ubiquitin)). Residues Thr-184 and Thr-187 each carry the phosphothreonine; by autocatalysis modification. Ser-192 carries the post-translational modification Phosphoserine; by autocatalysis. Lys-209 is covalently cross-linked (Glycyl lysine isopeptide (Lys-Gly) (interchain with G-Cter in ubiquitin)). Disordered stretches follow at residues 301-338 (PCQY…MEQV) and 354-391 (KNQA…MSAD). Polar residues predominate over residues 306–338 (DEGQSNSATSTGSFMDIASTNTSNKSDTNMEQV). Residues 361 to 375 (SESGRLSLGASRGSS) show a composition bias toward low complexity. Phosphoserine is present on residues Ser-367, Ser-389, and Ser-412. The segment covering 416 to 425 (LTVTGTEPGQ) has biased composition (polar residues). The segment at 416–466 (LTVTGTEPGQVSSRSSSPSVRMITTSGPTSEKPARSHPWTPDDSTDTNGSD) is disordered. A compositionally biased stretch (low complexity) spans 426 to 436 (VSSRSSSPSVR). Ser-428 carries the post-translational modification Phosphoserine.

The protein belongs to the protein kinase superfamily. STE Ser/Thr protein kinase family. MAP kinase kinase kinase subfamily. Can form homodimer. Binds both upstream activators and downstream substrates in multimolecular complexes. Interacts with TAB1/MAP3K7IP1, TAB2/MAP3K7IP2 and TAB3/MAP3K7IP3. Identified in the TRIKA2 complex composed of MAP3K7/TAK1, TAB1/MAP3K7IP1 and TAB2/MAP3K7IP2. Interacts with PPM1L and PPM1B/PP2CB. Interaction with PP2A and PPP6C leads to its repressed activity. Interacts with TRAF6 and TAB1/MAP3K7IP1; during IL-1 signaling. Interacts with TAOK1 and TAOK2; interaction with TAOK2 interferes with MAP3K7 interaction with IKKA, thus preventing NF-kappa-B activation. Interacts with DYNC2I2 (via WD domains). Interacts with CYLD and RBCK1. Interacts with TGFBR1; induces MAP3K7/TAK1 activation by TRAF6. Interacts with MAPK8IP1 and SMAD6. Interacts with isoform 1 of VRK2. Interacts with DAB2; the interaction is induced by TGF-beta stimulation and may mediate TGF-beta stimulated JNK activation. Interacts with TRIM5. Part of a complex containing ITCH, NDFIP1 and MAP3K7. Interacts with PLEKHM1 (via N- and C-terminus). Interacts with TRIM8. Found in a complex with SH3RF1, RAC2, MAP2K7/MKK7, MAPK8IP1/JIP1, MAPK8/JNK1 and MAPK9/JNK2. Interacts with SASH1. Interacts with RIPK1. Mg(2+) is required as a cofactor. Association with TAB1/MAP3K7IP1 promotes autophosphorylation and subsequent activation. Association with TAB2/MAP3K7IP2, itself associated with free unanchored Lys-63 polyubiquitin chain, promotes autophosphorylation and subsequent activation of MAP3K7. Dephosphorylation at Thr-187 by PP2A and PPP6C leads to inactivation. Post-translationally, 'Lys-48'-linked polyubiquitination at Lys-72 is induced by TNFalpha, and leads to proteasomal degradation. Undergoes 'Lys-48'-linked polyubiquitination catalyzed by ITCH. 'Lys-63'-linked polyubiquitination at Lys-158 by TRIM8 does not lead to proteasomal degradation but contributes to autophosphorylation and activation. Deubiquitinated by CYLD, a protease that selectively cleaves 'Lys-63'-linked ubiquitin chains.Deubiquitinated by USP19; leading to negative regulation of TNF-alpha- and IL-1beta-triggered NF-kappa-B activation.

The protein localises to the cytoplasm. Its subcellular location is the cell membrane. The enzyme catalyses L-seryl-[protein] + ATP = O-phospho-L-seryl-[protein] + ADP + H(+). The catalysed reaction is L-threonyl-[protein] + ATP = O-phospho-L-threonyl-[protein] + ADP + H(+). With respect to regulation, activated by pro-inflammatory cytokines and in response to physical and chemical stresses, including osmotic stress, oxidative stress, arsenic and ultraviolet light irradiation. Activated by 'Lys-63'-linked polyubiquitination and by autophosphorylation. Association with TAB1/MAP3K7IP1 and TAB2/MAP3K7IP2 promotes activation through autophosphorylation, whereas PPM1B/PP2CB, PP2A and PPP6C dephosphorylation leads to inactivation. Ceramides are also able to activate MAP3K7/TAK1. In terms of biological role, serine/threonine kinase which acts as an essential component of the MAP kinase signal transduction pathway. Plays an important role in the cascades of cellular responses evoked by changes in the environment. Mediates signal transduction of TRAF6, various cytokines including interleukin-1 (IL-1), transforming growth factor-beta (TGFB), TGFB-related factors like BMP2 and BMP4, toll-like receptors (TLR), tumor necrosis factor receptor CD40 and B-cell receptor (BCR). Once activated, acts as an upstream activator of the MKK/JNK signal transduction cascade and the p38 MAPK signal transduction cascade through the phosphorylation and activation of several MAP kinase kinases like MAP2K1/MEK1, MAP2K3/MKK3, MAP2K6/MKK6 and MAP2K7/MKK7. These MAP2Ks in turn activate p38 MAPKs and c-jun N-terminal kinases (JNKs); both p38 MAPK and JNK pathways control the transcription factors activator protein-1 (AP-1). Independently of MAP2Ks and p38 MAPKs, acts as a key activator of NF-kappa-B by promoting activation of the I-kappa-B-kinase (IKK) core complex. Mechanistically, recruited to polyubiquitin chains of RIPK2 and IKBKG/NEMO via TAB2/MAP3K7IP2 and TAB3/MAP3K7IP3, and catalyzes phosphorylation and activation of IKBKB/IKKB component of the IKK complex, leading to NF-kappa-B activation. In osmotic stress signaling, plays a major role in the activation of MAPK8/JNK1, but not that of NF-kappa-B. Promotes TRIM5 capsid-specific restriction activity. Phosphorylates RIPK1 at 'Ser-321' which positively regulates RIPK1 interaction with RIPK3 to promote necroptosis but negatively regulates RIPK1 kinase activity and its interaction with FADD to mediate apoptosis. Phosphorylates STING1 in response to cGAMP-activation, promoting association between STEEP1 and STING1 and STING1 translocation to COPII vesicles. This is Mitogen-activated protein kinase kinase kinase 7 (Map3k7) from Mus musculus (Mouse).